We begin with the raw amino-acid sequence, 321 residues long: Replication factor C small subunit (321 aa).

An ATP-binding site is contributed by 43–50; that stretch reads GFAGVGKT.

This sequence belongs to the activator 1 small subunits family. RfcS subfamily. As to quaternary structure, heteromultimer composed of small subunits (RfcS) and large subunits (RfcL).

Part of the RFC clamp loader complex which loads the PCNA sliding clamp onto DNA. This is Replication factor C small subunit from Methanosphaera stadtmanae (strain ATCC 43021 / DSM 3091 / JCM 11832 / MCB-3).